A 343-amino-acid polypeptide reads, in one-letter code: GTP 3',8-cyclase (343 aa).

Positions 19 to 244 (PYGRTISYLR…TDVDDSTGGP (226 aa)) constitute a Radical SAM core domain. R28 provides a ligand contact to GTP. The [4Fe-4S] cluster site is built by C35 and C39. Y41 serves as a coordination point for S-adenosyl-L-methionine. C42 contributes to the [4Fe-4S] cluster binding site. R77 contacts GTP. G81 contacts S-adenosyl-L-methionine. A GTP-binding site is contributed by T111. S135 serves as a coordination point for S-adenosyl-L-methionine. K171 lines the GTP pocket. M205 is a binding site for S-adenosyl-L-methionine. 2 residues coordinate [4Fe-4S] cluster: C268 and C271. GTP is bound at residue 273–275 (RVR). C285 provides a ligand contact to [4Fe-4S] cluster.

It belongs to the radical SAM superfamily. MoaA family. Monomer and homodimer. [4Fe-4S] cluster serves as cofactor.

The enzyme catalyses GTP + AH2 + S-adenosyl-L-methionine = (8S)-3',8-cyclo-7,8-dihydroguanosine 5'-triphosphate + 5'-deoxyadenosine + L-methionine + A + H(+). The protein operates within cofactor biosynthesis; molybdopterin biosynthesis. Functionally, catalyzes the cyclization of GTP to (8S)-3',8-cyclo-7,8-dihydroguanosine 5'-triphosphate. The protein is GTP 3',8-cyclase of Nitrobacter hamburgensis (strain DSM 10229 / NCIMB 13809 / X14).